The following is an 829-amino-acid chain: Probable beta-glucosidase H (829 aa).

An N-linked (GlcNAc...) asparagine glycan is attached at Asn-13. The active site involves Asp-225. Asn-304, Asn-473, Asn-602, Asn-627, and Asn-664 each carry an N-linked (GlcNAc...) asparagine glycan. Residues 389-548 (RMLSNAVIHF…DPEQMVANAV (160 aa)) enclose the PA14 domain.

It belongs to the glycosyl hydrolase 3 family.

The protein localises to the secreted. The catalysed reaction is Hydrolysis of terminal, non-reducing beta-D-glucosyl residues with release of beta-D-glucose.. It functions in the pathway glycan metabolism; cellulose degradation. Its function is as follows. Beta-glucosidases are one of a number of cellulolytic enzymes involved in the degradation of cellulosic biomass. Catalyzes the last step releasing glucose from the inhibitory cellobiose. In Aspergillus fumigatus (strain ATCC MYA-4609 / CBS 101355 / FGSC A1100 / Af293) (Neosartorya fumigata), this protein is Probable beta-glucosidase H (bglH).